Here is an 88-residue protein sequence, read N- to C-terminus: Apolipoprotein C-I (88 aa).

The first 26 residues, 1–26 (MRLFLSLPVLVVVLAMVLEGPAPAQA), serve as a signal peptide directing secretion.

It belongs to the apolipoprotein C1 family.

It localises to the secreted. Its function is as follows. Inhibitor of lipoprotein binding to the low density lipoprotein (LDL) receptor, LDL receptor-related protein, and very low density lipoprotein (VLDL) receptor. Associates with high density lipoproteins (HDL) and the triacylglycerol-rich lipoproteins in the plasma and makes up about 10% of the protein of the VLDL and 2% of that of HDL. Appears to interfere directly with fatty acid uptake and is also the major plasma inhibitor of cholesteryl ester transfer protein (CETP). Binds free fatty acids and reduces their intracellular esterification. Modulates the interaction of APOE with beta-migrating VLDL and inhibits binding of beta-VLDL to the LDL receptor-related protein. This chain is Apolipoprotein C-I (APOC1), found in Ailurus fulgens (Himalayan red panda).